The sequence spans 180 residues: Signal peptidase complex subunit 2 (180 aa).

Topologically, residues 1–45 (MTDEPVKVVNKWDGPTVKNALDEVVKKILNDKVGWTESHNLMNLR) are cytoplasmic. Residues 46 to 66 (LLISFIGVAFSAFACGYDYYE) traverse the membrane as a helical segment. The Lumenal portion of the chain corresponds to 67–72 (PFPKSK). The helical transmembrane segment at 73-93 (IVLAVCSVSYFICMGILQMYQ) threads the bilayer. At 94–180 (WYVEKDCIYE…LYNRLIRSEQ (87 aa)) the chain is on the cytoplasmic side.

It belongs to the SPCS2 family. As to quaternary structure, component of the signal peptidase complex (SPC) composed of a catalytic subunit sec-11 and three accessory subunits spcs-1, spcs-2 and spcs-3. The complex induces a local thinning of the ER membrane which is used to measure the length of the signal peptide (SP) h-region of protein substrates. This ensures the selectivity of the complex towards h-regions shorter than 18-20 amino acids.

Its subcellular location is the endoplasmic reticulum membrane. In terms of biological role, component of the signal peptidase complex (SPC) which catalyzes the cleavage of N-terminal signal sequences from nascent proteins as they are translocated into the lumen of the endoplasmic reticulum. Enhances the enzymatic activity of SPC and facilitates the interactions between different components of the translocation site. This chain is Signal peptidase complex subunit 2, found in Caenorhabditis elegans.